Consider the following 172-residue polypeptide: Protein GrpE (172 aa).

Positions 1 to 23 (MNQDHPEFDSEDLSQNPPETDPL) are disordered.

It belongs to the GrpE family. As to quaternary structure, homodimer.

The protein resides in the cytoplasm. In terms of biological role, participates actively in the response to hyperosmotic and heat shock by preventing the aggregation of stress-denatured proteins, in association with DnaK and GrpE. It is the nucleotide exchange factor for DnaK and may function as a thermosensor. Unfolded proteins bind initially to DnaJ; upon interaction with the DnaJ-bound protein, DnaK hydrolyzes its bound ATP, resulting in the formation of a stable complex. GrpE releases ADP from DnaK; ATP binding to DnaK triggers the release of the substrate protein, thus completing the reaction cycle. Several rounds of ATP-dependent interactions between DnaJ, DnaK and GrpE are required for fully efficient folding. This Xanthomonas axonopodis pv. citri (strain 306) protein is Protein GrpE.